A 391-amino-acid polypeptide reads, in one-letter code: Arsenite methyltransferase (391 aa).

Positions 1–126 (MELWTHPTPA…TMVADRDPEE (126 aa)) are disordered. Polar residues predominate over residues 28 to 39 (CSQPWATTPGTN). Positions 40–65 (SSDASRTPTTASASATSKPQSASARA) are enriched in low complexity. The span at 102-116 (KRSTTCEATMSNDNE) shows a compositional bias: polar residues.

This sequence belongs to the methyltransferase superfamily. Arsenite methyltransferase family.

It carries out the reaction arsenic triglutathione + [thioredoxin]-dithiol + S-adenosyl-L-methionine + 2 H2O = methylarsonous acid + [thioredoxin]-disulfide + 3 glutathione + S-adenosyl-L-homocysteine + H(+). It catalyses the reaction arsenic triglutathione + 2 [thioredoxin]-dithiol + 2 S-adenosyl-L-methionine + H2O = dimethylarsinous acid + 2 [thioredoxin]-disulfide + 3 glutathione + 2 S-adenosyl-L-homocysteine + 2 H(+). The enzyme catalyses arsenic triglutathione + 3 [thioredoxin]-dithiol + 3 S-adenosyl-L-methionine = trimethylarsine + 3 [thioredoxin]-disulfide + 3 glutathione + 3 S-adenosyl-L-homocysteine + 3 H(+). Functionally, catalyzes the transfer of a methyl group from AdoMet to arsenite, producing methylated arsenicals. The chain is Arsenite methyltransferase from Halobacterium salinarum (strain ATCC 700922 / JCM 11081 / NRC-1) (Halobacterium halobium).